We begin with the raw amino-acid sequence, 259 residues long: Global transcriptional regulator CodY (259 aa).

Residues 1–155 form a GAF domain region; that stretch reads MELLAKTRKL…SSTVVGMEIL (155 aa). The segment at residues 203–222 is a DNA-binding region (H-T-H motif); that stretch reads ASKIADRVGITRSVIVNALR. At S215 the chain carries Phosphoserine.

This sequence belongs to the CodY family.

It localises to the cytoplasm. DNA-binding global transcriptional regulator which is involved in the adaptive response to starvation and acts by directly or indirectly controlling the expression of numerous genes in response to nutrient availability. During rapid exponential growth, CodY is highly active and represses genes whose products allow adaptation to nutrient depletion. The polypeptide is Global transcriptional regulator CodY (Bacillus cereus (strain ATCC 10987 / NRS 248)).